The sequence spans 110 residues: Large ribosomal subunit protein uL24 (110 aa).

Belongs to the universal ribosomal protein uL24 family. Part of the 50S ribosomal subunit.

Its function is as follows. One of two assembly initiator proteins, it binds directly to the 5'-end of the 23S rRNA, where it nucleates assembly of the 50S subunit. One of the proteins that surrounds the polypeptide exit tunnel on the outside of the subunit. The polypeptide is Large ribosomal subunit protein uL24 (Thermus thermophilus (strain ATCC BAA-163 / DSM 7039 / HB27)).